The primary structure comprises 463 residues: HEPACAM family member 2 (463 aa).

An N-terminal signal peptide occupies residues 1–32; it reads MGQDAFMELLRSMVGLSLCKIHLLLIAGSCLG. Residues Asn-86, Asn-130, and Asn-166 are each glycosylated (N-linked (GlcNAc...) asparagine). Ig-like C2-type domains are found at residues 150–234 and 236–332; these read PMVQ…SDII and PTIY…TRFT. 2 cysteine pairs are disulfide-bonded: Cys-171/Cys-220 and Cys-271/Cys-316. N-linked (GlcNAc...) asparagine glycosylation is present at Asn-321. A helical membrane pass occupies residues 353-373; sequence LASITGISLFLIISMCLLFLW. The Cytoplasmic segment spans residues 374-463; sequence KKYQPYKAIR…IPEQQQENTE (90 aa).

In terms of processing, poly-ADP-ribosylated (PARsylated) by tankyrase TNKS during late G2 and prophase, leading to translocation to mitotic centrosomes. N-glycosylated.

It localises to the golgi apparatus membrane. The protein localises to the cytoplasm. It is found in the cytoskeleton. Its subcellular location is the spindle. The protein resides in the microtubule organizing center. It localises to the centrosome. The protein localises to the midbody. Its function is as follows. Required during prometaphase for centrosome maturation. Following poly-ADP-ribosylation (PARsylation) by TNKS, translocates from the Golgi apparatus to mitotic centrosomes and plays a key role in the formation of robust microtubules for prompt movement of chromosomes: anchors AKAP9/CG-NAP, a scaffold protein of the gamma-tubulin ring complex and promotes centrosome maturation. The polypeptide is HEPACAM family member 2 (Hepacam2) (Mus musculus (Mouse)).